The following is a 920-amino-acid chain: Protein translocase subunit SecA (920 aa).

ATP contacts are provided by residues Gln-85, 103-107, and Asp-514; that span reads GEGKT. The Zn(2+) site is built by Cys-904, Cys-906, Cys-915, and His-916.

It belongs to the SecA family. As to quaternary structure, monomer and homodimer. Part of the essential Sec protein translocation apparatus which comprises SecA, SecYEG and auxiliary proteins SecDF-YajC and YidC. Zn(2+) is required as a cofactor.

The protein localises to the cell inner membrane. The protein resides in the cytoplasm. The catalysed reaction is ATP + H2O + cellular proteinSide 1 = ADP + phosphate + cellular proteinSide 2.. Functionally, part of the Sec protein translocase complex. Interacts with the SecYEG preprotein conducting channel. Has a central role in coupling the hydrolysis of ATP to the transfer of proteins into and across the cell membrane, serving both as a receptor for the preprotein-SecB complex and as an ATP-driven molecular motor driving the stepwise translocation of polypeptide chains across the membrane. This Janthinobacterium sp. (strain Marseille) (Minibacterium massiliensis) protein is Protein translocase subunit SecA.